We begin with the raw amino-acid sequence, 345 residues long: Sulfate/thiosulfate import ATP-binding protein CysA (345 aa).

One can recognise an ABC transporter domain in the interval 3–237 (IQVSGLCKHF…PRTEFVYQFV (235 aa)). 35 to 42 (GPSGCGKT) lines the ATP pocket.

It belongs to the ABC transporter superfamily. Sulfate/tungstate importer (TC 3.A.1.6) family. As to quaternary structure, the complex is composed of two ATP-binding proteins (CysA), two transmembrane proteins (CysT and CysW) and a solute-binding protein (CysP).

The protein localises to the cell inner membrane. The enzyme catalyses sulfate(out) + ATP + H2O = sulfate(in) + ADP + phosphate + H(+). The catalysed reaction is thiosulfate(out) + ATP + H2O = thiosulfate(in) + ADP + phosphate + H(+). In terms of biological role, part of the ABC transporter complex CysAWTP involved in sulfate/thiosulfate import. Responsible for energy coupling to the transport system. This chain is Sulfate/thiosulfate import ATP-binding protein CysA, found in Vibrio vulnificus (strain CMCP6).